The sequence spans 89 residues: MAISKERKDQIIKEFATHEGDTGSTQVQVAVLTADINELNDHLRTHKHDYHSQRGLMKKIGHRRNLLAYLRRTDLPAYRELIQKLGLRR.

This sequence belongs to the universal ribosomal protein uS15 family. As to quaternary structure, part of the 30S ribosomal subunit. Forms a bridge to the 50S subunit in the 70S ribosome, contacting the 23S rRNA.

One of the primary rRNA binding proteins, it binds directly to 16S rRNA where it helps nucleate assembly of the platform of the 30S subunit by binding and bridging several RNA helices of the 16S rRNA. Functionally, forms an intersubunit bridge (bridge B4) with the 23S rRNA of the 50S subunit in the ribosome. This is Small ribosomal subunit protein uS15 from Limosilactobacillus reuteri (strain DSM 20016) (Lactobacillus reuteri).